Consider the following 248-residue polypeptide: 3-deoxy-manno-octulosonate cytidylyltransferase 2 (248 aa).

The protein belongs to the KdsB family.

The protein localises to the cytoplasm. It catalyses the reaction 3-deoxy-alpha-D-manno-oct-2-ulosonate + CTP = CMP-3-deoxy-beta-D-manno-octulosonate + diphosphate. It functions in the pathway nucleotide-sugar biosynthesis; CMP-3-deoxy-D-manno-octulosonate biosynthesis; CMP-3-deoxy-D-manno-octulosonate from 3-deoxy-D-manno-octulosonate and CTP: step 1/1. The protein operates within bacterial outer membrane biogenesis; lipopolysaccharide biosynthesis. Activates KDO (a required 8-carbon sugar) for incorporation into bacterial lipopolysaccharide in Gram-negative bacteria. The protein is 3-deoxy-manno-octulosonate cytidylyltransferase 2 of Hydrogenovibrio crunogenus (strain DSM 25203 / XCL-2) (Thiomicrospira crunogena).